The following is a 66-amino-acid chain: uncharacterized protein (66 aa).

The tract at residues 1–20 is hydrophobic; sequence MIALAYLATVAIAAMVLAVA.

This is an uncharacterized protein from Streptomyces lividans.